The following is a 249-amino-acid chain: Ribosomal RNA small subunit methyltransferase G (249 aa).

Residues Gly-88, Phe-93, 111 to 113 (DAT), 139 to 140 (AE), and Arg-158 each bind S-adenosyl-L-methionine. The cysteines at positions 164 and 249 are disulfide-linked. An RNA binding region spans residues 245–246 (RH).

It belongs to the methyltransferase superfamily. RNA methyltransferase RsmG family.

The protein resides in the cytoplasm. The catalysed reaction is guanosine(527) in 16S rRNA + S-adenosyl-L-methionine = N(7)-methylguanosine(527) in 16S rRNA + S-adenosyl-L-homocysteine. Specifically methylates the N7 position of guanine in position 527 of 16S rRNA. Shows a marked preference for deproteinized 16S rRNA as substrate and is completely inactive with native 30S subunits as substrate. This is Ribosomal RNA small subunit methyltransferase G from Thermus thermophilus (strain ATCC 27634 / DSM 579 / HB8).